We begin with the raw amino-acid sequence, 1546 residues long: Hybrid signal transduction histidine kinase D (1546 aa).

Residues 36-63 (MRKQKPDHEKTREELIEEINHLRAVSNS) adopt a coiled-coil conformation. In terms of domain architecture, PAS spans 65 to 131 (KNARIMLDEM…NIDNVREAVH (67 aa)). A PAC domain is found at 139–193 (IRYETEIFGKSAGTEKITIDFSLMPLFNDKGEVSLILPEGRNITEKRLGELEIER). Residues 218-440 (NVSHELRTPL…QFTLRLPLTP (223 aa)) form the Histidine kinase 1 domain. Position 221 is a phosphohistidine; by autocatalysis (H221). A Response regulatory 1 domain is found at 571-686 (IVLVVEDNPE…ELVARVVNLM (116 aa)). 4-aspartylphosphate is present on D619. The region spanning 747-1010 (NLSHELRTPL…QFTVVLPIIK (264 aa)) is the Histidine kinase 2 domain. Phosphohistidine; by autocatalysis is present on H750. Composition is skewed to low complexity over residues 1013–1031 (SSSN…SPPL) and 1042–1146 (NYIN…SNNN). 3 disordered regions span residues 1013–1148 (SSSN…NNEK), 1266–1285 (NNSN…PPSS), and 1313–1350 (PLSE…KANS). The segment covering 1313–1346 (PLSELKSSSNNNNNNNNNSNNNNNNSMSPNLRSP) has biased composition (low complexity). Residues 1359–1483 (QIMLVDDLEE…ELSNSILTLI (125 aa)) form the Response regulatory 2 domain. The residue at position 1412 (D1412) is a 4-aspartylphosphate. Residues 1500 to 1546 (QNNNNNNNNNNNNNNNNNNNNNNINNGNDDDSLLLTDSRPCKKANSQ) form a disordered region. The span at 1501-1526 (NNNNNNNNNNNNNNNNNNNNNNINNG) shows a compositional bias: low complexity.

The enzyme catalyses ATP + protein L-histidine = ADP + protein N-phospho-L-histidine.. Functionally, acts as a receptor histidine kinase for a signal transduction pathway. This protein undergoes an ATP-dependent autophosphorylation at a conserved histidine residue in the kinase core, and a phosphoryl group is then transferred to a conserved aspartate residue in the receiver domain. The polypeptide is Hybrid signal transduction histidine kinase D (dhkD) (Dictyostelium discoideum (Social amoeba)).